Consider the following 343-residue polypeptide: Heat-inducible transcription repressor HrcA (343 aa).

It belongs to the HrcA family.

Its function is as follows. Negative regulator of class I heat shock genes (grpE-dnaK-dnaJ and groELS operons). Prevents heat-shock induction of these operons. In Mycobacterium marinum (strain ATCC BAA-535 / M), this protein is Heat-inducible transcription repressor HrcA.